We begin with the raw amino-acid sequence, 145 residues long: D-aminoacyl-tRNA deacylase (145 aa).

Positions 137–138 match the Gly-cisPro motif, important for rejection of L-amino acids motif; sequence GP.

This sequence belongs to the DTD family. In terms of assembly, homodimer.

The protein resides in the cytoplasm. The enzyme catalyses glycyl-tRNA(Ala) + H2O = tRNA(Ala) + glycine + H(+). It catalyses the reaction a D-aminoacyl-tRNA + H2O = a tRNA + a D-alpha-amino acid + H(+). In terms of biological role, an aminoacyl-tRNA editing enzyme that deacylates mischarged D-aminoacyl-tRNAs. Also deacylates mischarged glycyl-tRNA(Ala), protecting cells against glycine mischarging by AlaRS. Acts via tRNA-based rather than protein-based catalysis; rejects L-amino acids rather than detecting D-amino acids in the active site. By recycling D-aminoacyl-tRNA to D-amino acids and free tRNA molecules, this enzyme counteracts the toxicity associated with the formation of D-aminoacyl-tRNA entities in vivo and helps enforce protein L-homochirality. The chain is D-aminoacyl-tRNA deacylase from Alteromonas mediterranea (strain DSM 17117 / CIP 110805 / LMG 28347 / Deep ecotype).